A 356-amino-acid chain; its full sequence is UDP-N-acetylglucosamine--N-acetylmuramyl-(pentapeptide) pyrophosphoryl-undecaprenol N-acetylglucosamine transferase (356 aa).

UDP-N-acetyl-alpha-D-glucosamine contacts are provided by residues 15–17, N127, R163, S191, I244, 263–268, and Q288; these read TGG and ALTVSE.

It belongs to the glycosyltransferase 28 family. MurG subfamily.

It localises to the cell inner membrane. The catalysed reaction is di-trans,octa-cis-undecaprenyl diphospho-N-acetyl-alpha-D-muramoyl-L-alanyl-D-glutamyl-meso-2,6-diaminopimeloyl-D-alanyl-D-alanine + UDP-N-acetyl-alpha-D-glucosamine = di-trans,octa-cis-undecaprenyl diphospho-[N-acetyl-alpha-D-glucosaminyl-(1-&gt;4)]-N-acetyl-alpha-D-muramoyl-L-alanyl-D-glutamyl-meso-2,6-diaminopimeloyl-D-alanyl-D-alanine + UDP + H(+). It functions in the pathway cell wall biogenesis; peptidoglycan biosynthesis. In terms of biological role, cell wall formation. Catalyzes the transfer of a GlcNAc subunit on undecaprenyl-pyrophosphoryl-MurNAc-pentapeptide (lipid intermediate I) to form undecaprenyl-pyrophosphoryl-MurNAc-(pentapeptide)GlcNAc (lipid intermediate II). The protein is UDP-N-acetylglucosamine--N-acetylmuramyl-(pentapeptide) pyrophosphoryl-undecaprenol N-acetylglucosamine transferase of Yersinia pseudotuberculosis serotype O:1b (strain IP 31758).